The following is a 556-amino-acid chain: Formate--tetrahydrofolate ligase (556 aa).

65 to 72 (TPAGEGKS) contacts ATP.

It belongs to the formate--tetrahydrofolate ligase family.

It carries out the reaction (6S)-5,6,7,8-tetrahydrofolate + formate + ATP = (6R)-10-formyltetrahydrofolate + ADP + phosphate. It participates in one-carbon metabolism; tetrahydrofolate interconversion. In Clostridium perfringens (strain 13 / Type A), this protein is Formate--tetrahydrofolate ligase.